The primary structure comprises 301 residues: Small ribosomal subunit protein uS2 (301 aa).

This sequence belongs to the universal ribosomal protein uS2 family. Component of the small ribosomal subunit. Mature ribosomes consist of a small (40S) and a large (60S) subunit. The 40S subunit contains about 33 different proteins and 1 molecule of RNA (18S). The 60S subunit contains about 49 different proteins and 3 molecules of RNA (28S, 5.8S and 5S). Interacts with ribosomal protein S21.

The protein resides in the cytoplasm. Required for the assembly and/or stability of the 40S ribosomal subunit. Required for the processing of the 20S rRNA-precursor to mature 18S rRNA in a late step of the maturation of 40S ribosomal subunits. The sequence is that of Small ribosomal subunit protein uS2 from Brugia malayi (Filarial nematode worm).